Consider the following 554-residue polypeptide: Chaperonin GroEL (554 aa).

ATP contacts are provided by residues 29-32 (TLGP), lysine 50, 86-90 (DGTTT), glycine 414, and aspartate 495.

This sequence belongs to the chaperonin (HSP60) family. As to quaternary structure, forms a cylinder of 14 subunits composed of two heptameric rings stacked back-to-back. Interacts with the co-chaperonin GroES.

It is found in the cytoplasm. The enzyme catalyses ATP + H2O + a folded polypeptide = ADP + phosphate + an unfolded polypeptide.. In terms of biological role, together with its co-chaperonin GroES, plays an essential role in assisting protein folding. The GroEL-GroES system forms a nano-cage that allows encapsulation of the non-native substrate proteins and provides a physical environment optimized to promote and accelerate protein folding. The chain is Chaperonin GroEL from Pelagibacter ubique (strain HTCC1062).